Reading from the N-terminus, the 80-residue chain is Exodeoxyribonuclease 7 small subunit (80 aa).

The protein belongs to the XseB family. In terms of assembly, heterooligomer composed of large and small subunits.

It localises to the cytoplasm. It carries out the reaction Exonucleolytic cleavage in either 5'- to 3'- or 3'- to 5'-direction to yield nucleoside 5'-phosphates.. Functionally, bidirectionally degrades single-stranded DNA into large acid-insoluble oligonucleotides, which are then degraded further into small acid-soluble oligonucleotides. The chain is Exodeoxyribonuclease 7 small subunit from Vibrio atlanticus (strain LGP32) (Vibrio splendidus (strain Mel32)).